Here is a 177-residue protein sequence, read N- to C-terminus: ATP synthase subunit delta, chloroplastic (177 aa).

The protein belongs to the ATPase delta chain family. As to quaternary structure, F-type ATPases have 2 components, F(1) - the catalytic core - and F(0) - the membrane proton channel. F(1) has five subunits: alpha(3), beta(3), gamma(1), delta(1), epsilon(1). CF(0) has four main subunits: a(1), b(1), b'(1) and c(10-14). The alpha and beta chains form an alternating ring which encloses part of the gamma chain. F(1) is attached to F(0) by a central stalk formed by the gamma and epsilon chains, while a peripheral stalk is formed by the delta, b and b' chains.

The protein localises to the plastid. It is found in the chloroplast thylakoid membrane. Its function is as follows. F(1)F(0) ATP synthase produces ATP from ADP in the presence of a proton or sodium gradient. F-type ATPases consist of two structural domains, F(1) containing the extramembraneous catalytic core and F(0) containing the membrane proton channel, linked together by a central stalk and a peripheral stalk. During catalysis, ATP synthesis in the catalytic domain of F(1) is coupled via a rotary mechanism of the central stalk subunits to proton translocation. In terms of biological role, this protein is part of the stalk that links CF(0) to CF(1). It either transmits conformational changes from CF(0) to CF(1) or is implicated in proton conduction. This Galdieria sulphuraria (Red alga) protein is ATP synthase subunit delta, chloroplastic.